Consider the following 636-residue polypeptide: Outer spore wall assembly protein SHE10 (636 aa).

The first 23 residues, Met1–Tyr23, serve as a signal peptide directing secretion. Coiled-coil stretches lie at residues Arg433–Glu460 and Lys551–Glu584. A disordered region spans residues Gln565–Ser607. Low complexity predominate over residues Ala579–Ser607.

The protein belongs to the SHE10 family. As to quaternary structure, component of the mitochondria-localized RNase mitochondrial RNA-processing (RNase MRP) composed of one single RNA encoded by the NME1 gene and at least 31 proteins. Absent in the nucleus-localized RNase MRP (NuMRP).

It is found in the mitochondrion. In terms of biological role, involved in spore wall assembly. May be a component of the mitochondrial RNase MRP (MtMRP), a ribonucleoprotein endoribonuclease involved in the cleaving RNA transcripts to generate primers for DNA replication in mitochondria. The chain is Outer spore wall assembly protein SHE10 from Kluyveromyces lactis (strain ATCC 8585 / CBS 2359 / DSM 70799 / NBRC 1267 / NRRL Y-1140 / WM37) (Yeast).